The sequence spans 186 residues: Ribonuclease HII (186 aa).

In terms of domain architecture, RNase H type-2 spans 2–186 (KILAGVDEVG…KTFSPISDLL (185 aa)). 3 residues coordinate a divalent metal cation: Asp-8, Glu-9, and Asp-99.

Belongs to the RNase HII family. Mn(2+) serves as cofactor. The cofactor is Mg(2+).

The protein resides in the cytoplasm. It carries out the reaction Endonucleolytic cleavage to 5'-phosphomonoester.. Functionally, endonuclease that specifically degrades the RNA of RNA-DNA hybrids. This Pelagibacter ubique (strain HTCC1062) protein is Ribonuclease HII.